A 578-amino-acid chain; its full sequence is Putative transporter B0361.11 (578 aa).

Positions 1 to 30 (MSISRRSYEQFDEMKSENQENNSKKKSSER) are disordered. The next 11 membrane-spanning stretches (helical) occupy residues 51 to 71 (IFTYVLVQTLNFFYSSSMYIM), 148 to 168 (FGLTIFTIGAVIAVPFMSMLA), 182 to 202 (ILAFLANMAASFSPNFAIFLI), 232 to 252 (AWITVVYNVAWSLGMVWTLLV), 263 to 283 (YFIVSLPGVYGFALWYFLPES), 339 to 359 (IWLLFANGFIEMVISLVYFAI), 373 to 393 (AFLYSSLIEIPAGLAVIPLMM), 399 to 419 (MIVIWCLVFQTLALIGVTVFL), 426 to 446 (LVIMLVAKVMATIIYSVHPIW), 457 to 477 (SLCFSLMNIPQSMGIIMSPYV), and 486 to 506 (WIPFVVIALFSFISATLAFML). The segment covering 532-550 (AYRRSKSSSSSVSALSKTS) has biased composition (low complexity). A disordered region spans residues 532 to 561 (AYRRSKSSSSSVSALSKTSVRSKKTLSSES).

Belongs to the major facilitator superfamily. Sugar transporter (TC 2.A.1.1) family.

Its subcellular location is the membrane. This chain is Putative transporter B0361.11, found in Caenorhabditis elegans.